Consider the following 232-residue polypeptide: Probable dihydroorotate dehydrogenase B (NAD(+)), electron transfer subunit (232 aa).

Positions 1 to 86 constitute an FAD-binding FR-type domain; it reads MYYTRITQIE…RGAFGSAFTP (86 aa). Cys-202, Cys-207, Cys-210, and Cys-219 together coordinate [2Fe-2S] cluster.

This sequence belongs to the PyrK family. As to quaternary structure, heterotetramer of 2 PyrK and 2 PyrD type B subunits. It depends on [2Fe-2S] cluster as a cofactor. FAD serves as cofactor.

Its pathway is pyrimidine metabolism; UMP biosynthesis via de novo pathway; orotate from (S)-dihydroorotate (NAD(+) route): step 1/1. In terms of biological role, responsible for channeling the electrons from the oxidation of dihydroorotate from the FMN redox center in the PyrD type B subunit to the ultimate electron acceptor NAD(+). The protein is Probable dihydroorotate dehydrogenase B (NAD(+)), electron transfer subunit of Archaeoglobus fulgidus (strain ATCC 49558 / DSM 4304 / JCM 9628 / NBRC 100126 / VC-16).